The primary structure comprises 495 residues: Protein-serine O-palmitoleoyltransferase porcupine (495 aa).

Transmembrane regions (helical) follow at residues 46–66, 92–112, 184–204, 232–252, 358–378, 403–422, 434–454, and 475–495; these read TQYI…VLIV, VIDH…AVQW, TVLS…GPWI, MLIH…FLLT, PFGT…LHGL, LATI…SCTV, VINM…GCIF, and TELN…YFVI. His376 is a catalytic residue.

The protein belongs to the membrane-bound acyltransferase family. Porcupine subfamily.

Its subcellular location is the endoplasmic reticulum membrane. It catalyses the reaction [Wnt protein]-L-serine + (9Z)-hexadecenoyl-CoA = [Wnt protein]-O-(9Z)-hexadecenoyl-L-serine + CoA. Protein-serine O-palmitoleoyltransferase that acts as a key regulator of the Wnt signaling pathway by mediating the attachment of palmitoleate, a 16-carbon monounsaturated fatty acid (C16:1(9Z)), to Wnt proteins. Serine palmitoleoylation of WNT proteins is required for efficient binding to frizzled receptors. The chain is Protein-serine O-palmitoleoyltransferase porcupine from Anopheles gambiae (African malaria mosquito).